A 945-amino-acid chain; its full sequence is Poly [ADP-ribose] polymerase 1 (945 aa).

Residues 10 to 96 (YAIEYAKSGR…KLRQEIQHFK (87 aa)) form a PARP-type 1 zinc finger. Positions 22, 25, 54, and 57 each coordinate Zn(2+). Residues 117–183 (IKTEKSLSNR…DYEENFKIKA (67 aa)) form a PARP-type 2; degenerate zinc finger. Positions 195–251 (RRSTEPATPASASPTPPEAETPVLSAEGSPESSNKRPASSEIIEIDGEGNPDENDFA) are disordered. Acidic residues predominate over residues 237 to 248 (IEIDGEGNPDEN). The PADR1 zinc-binding domain occupies 258–397 (KEARLMEVQK…NQMSERLYIG (140 aa)). The interval 324-369 (GCPIICQTCSNGKIVYNSSCRTYVCTGYATEYSKCTYESKNPIRTP) is zinc ribbon. Zn(2+)-binding residues include Cys-329, Cys-332, Cys-348, and Cys-358. The 100-residue stretch at 464–563 (RCHVFKNEID…KHFRKMPGMF (100 aa)) folds into the WGR domain. A PARP alpha-helical domain is found at 586 to 704 (KTLLPKSVKE…DIKFAYDQIS (119 aa)). The region spanning 717–945 (DPVDINYQKL…RVKMHHARHL (229 aa)) is the PARP catalytic domain.

The protein belongs to the ARTD/PARP family.

It is found in the nucleus. The catalysed reaction is NAD(+) + (ADP-D-ribosyl)n-acceptor = nicotinamide + (ADP-D-ribosyl)n+1-acceptor + H(+).. It catalyses the reaction L-aspartyl-[protein] + NAD(+) = 4-O-(ADP-D-ribosyl)-L-aspartyl-[protein] + nicotinamide. It carries out the reaction L-glutamyl-[protein] + NAD(+) = 5-O-(ADP-D-ribosyl)-L-glutamyl-[protein] + nicotinamide. With respect to regulation, inhibited by N-(6-oxo-5,6-dihydrophenanthridin-2-yl)-N,N-dimethylacetamide HCl (PJ34), 1,5-dihydroxyisoquinoline (DHQ) and 3-aminobenzamide (3AB). In terms of biological role, poly[ADP-ribose] polymerase modifies various nuclear proteins by poly(ADP-ribosyl)ation, a post-translational modification synthesized after DNA damage that appears as an obligatory step in a detection/signaling pathway leading to the reparation of DNA strand breaks and programmed cell death. Involved in protection of the genome against mutations. The sequence is that of Poly [ADP-ribose] polymerase 1 from Caenorhabditis elegans.